A 513-amino-acid polypeptide reads, in one-letter code: Ribonuclease Y (513 aa).

Residues 3–23 (IGTLLLFTFLGLVAGATAVWL) traverse the membrane as a helical segment. The tract at residues 77 to 96 (LQSVESKLKSREQTLNQRQE) is disordered. Residues 82-96 (SKLKSREQTLNQRQE) show a composition bias toward basic and acidic residues. The region spanning 203-263 (SVTVFHIESD…VRREIARLAL (61 aa)) is the KH domain. The HD domain occupies 329–422 (LLQHSRETAN…VQVCDAISGA (94 aa)).

Belongs to the RNase Y family.

The protein localises to the cell membrane. Its function is as follows. Endoribonuclease that initiates mRNA decay. This Porphyromonas gingivalis (strain ATCC BAA-308 / W83) protein is Ribonuclease Y.